The chain runs to 444 residues: Cell wall mannoprotein PST1 (444 aa).

Positions 1-19 (MQLHSLIASTALLITSALA) are cleaved as a signal peptide. Residues Asn-57, Asn-76, Asn-83, Asn-86, Asn-196, Asn-210, Asn-228, Asn-235, Asn-242, Asn-263, Asn-268, Asn-280, Asn-292, Asn-305, and Asn-329 are each glycosylated (N-linked (GlcNAc...) asparagine). Low complexity-rich tracts occupy residues 359-381 (SVKLSSTSKSQSSQTTAKVSKSS) and 395-418 (KAAASASSVSSSGASSSSSKSSKG). The disordered stretch occupies residues 359 to 418 (SVKLSSTSKSQSSQTTAKVSKSSSKAEEKKFTSGDIKAAASASSVSSSGASSSSSKSSKG). Residue Asn-419 is the site of GPI-anchor amidated asparagine attachment. The propeptide at 420-444 (AAIMAPIGQTTPLVGLLTAIIMSIM) is removed in mature form.

It belongs to the SPS2 family. Post-translationally, extensively N- and O-mannosylated.

Its subcellular location is the cell membrane. The protein resides in the secreted. The protein localises to the cell wall. In terms of biological role, has a partially redundant function to ECM33 in cell wall integrity. May be involved in a repair mechanism activated in response to cell wall damage. The protein is Cell wall mannoprotein PST1 (PST1) of Saccharomyces cerevisiae (strain ATCC 204508 / S288c) (Baker's yeast).